The chain runs to 363 residues: 3-dehydroquinate synthase (363 aa).

NAD(+) contacts are provided by residues 74–79 (DGEQYK), 108–112 (GVIGD), 132–133 (TT), Lys-145, Lys-154, and 172–175 (CLKT). The Zn(2+) site is built by Glu-187, His-250, and His-267.

The protein belongs to the sugar phosphate cyclases superfamily. Dehydroquinate synthase family. It depends on NAD(+) as a cofactor. Requires Co(2+) as cofactor. Zn(2+) serves as cofactor.

The protein localises to the cytoplasm. The enzyme catalyses 7-phospho-2-dehydro-3-deoxy-D-arabino-heptonate = 3-dehydroquinate + phosphate. Its pathway is metabolic intermediate biosynthesis; chorismate biosynthesis; chorismate from D-erythrose 4-phosphate and phosphoenolpyruvate: step 2/7. Functionally, catalyzes the conversion of 3-deoxy-D-arabino-heptulosonate 7-phosphate (DAHP) to dehydroquinate (DHQ). This is 3-dehydroquinate synthase from Buchnera aphidicola subsp. Acyrthosiphon pisum (strain APS) (Acyrthosiphon pisum symbiotic bacterium).